Here is a 239-residue protein sequence, read N- to C-terminus: MRPSGRKTDQMRKVSFERNFSKHAEGSCLVRFGDTHVLCTASLEDKVPAWLRNGGKGWITAEYGMLPRATGERMRREASTGKQSGRTQEIQRLIGRSLRAVVDLPALGERQISIDCDVIQADGGTRTASITGAWIALHDCLKWMEARNMIKVERVLKDHVAAISCGIFANQAVVDLDYLEDSAAETDANFVMTGSGGLVEIQGTAEGKPFSEEEFASLMQLAKDGIAELVALQKQAVAG.

Residues Arg-86 and Gly-124–Arg-126 contribute to the phosphate site.

The protein belongs to the RNase PH family. In terms of assembly, homohexameric ring arranged as a trimer of dimers.

The catalysed reaction is tRNA(n+1) + phosphate = tRNA(n) + a ribonucleoside 5'-diphosphate. Functionally, phosphorolytic 3'-5' exoribonuclease that plays an important role in tRNA 3'-end maturation. Removes nucleotide residues following the 3'-CCA terminus of tRNAs; can also add nucleotides to the ends of RNA molecules by using nucleoside diphosphates as substrates, but this may not be physiologically important. Probably plays a role in initiation of 16S rRNA degradation (leading to ribosome degradation) during starvation. The protein is Ribonuclease PH of Sinorhizobium fredii (strain NBRC 101917 / NGR234).